The chain runs to 385 residues: MIQAPRIALIAGEASGDHLGAGLIQQLRLHFPTAEFIGIGGDMMRSAGCQTWFDTTELAVMGLTEVLRHLPRLLKIRREFCKRALAWHPDVLIGIDAPDFNLTVERWFKQRHIRTVHYVSPSIWAWREKRAAKIGASVDRVLCLFPMEPPIYARYGIDARFVGHPMADEIPYQTDRATARTALGLPLLSPVLAVLPGSRHSEISQLGNTFLEAAGQLSEHLPGLHVVIPAANTQCKPLLAEQLSRSTLPVMHSHLLDSSARTAMLAADVVLVASGTATLEAMLLKRPMVVAYKVAPLTYRIVKTLKLLKINRFALPNILAGEDLAPELIQKDCTAPALCAALLHWFKHPQKVTALQNRYLQLHTQLRRNASTRAAEAIAELLQQR.

The protein belongs to the LpxB family.

It catalyses the reaction a lipid X + a UDP-2-N,3-O-bis[(3R)-3-hydroxyacyl]-alpha-D-glucosamine = a lipid A disaccharide + UDP + H(+). It participates in bacterial outer membrane biogenesis; LPS lipid A biosynthesis. Condensation of UDP-2,3-diacylglucosamine and 2,3-diacylglucosamine-1-phosphate to form lipid A disaccharide, a precursor of lipid A, a phosphorylated glycolipid that anchors the lipopolysaccharide to the outer membrane of the cell. This is Lipid-A-disaccharide synthase from Xylella fastidiosa (strain M12).